The chain runs to 144 residues: MDSEEEEEVPQPMPSIPEDLESQKAMVAFFNSAVASAEEEQARLCGQLKECTASAWLICWPRPRRNLRQQPQPQELGVIPCVGRPTRPCRGPWRSCGRVHRTVPEPEGSAEGGGVHQQAGPGQGRGEGEAAGAGVACGRLQQVA.

2 disordered regions span residues Met1–Leu20 and Ser95–Gly132. Positions Ala110–Ala131 are enriched in gly residues.

This sequence belongs to the GOLGA2 family.

This Homo sapiens (Human) protein is Putative golgin subfamily A member 2B (GOLGA2P5).